A 94-amino-acid polypeptide reads, in one-letter code: Small ribosomal subunit protein uS19 (94 aa).

It belongs to the universal ribosomal protein uS19 family.

Functionally, protein S19 forms a complex with S13 that binds strongly to the 16S ribosomal RNA. The chain is Small ribosomal subunit protein uS19 (rpsS) from Lactobacillus acidophilus (strain ATCC 700396 / NCK56 / N2 / NCFM).